The chain runs to 616 residues: Prolactin receptor (616 aa).

Positions 1 to 24 (MKENVASMIVFLLLLFLNIRLLKG) are cleaved as a signal peptide. At 25–234 (QSPPGKPFIF…QIPNDFTMKD (210 aa)) the chain is on the extracellular side. Fibronectin type-III domains follow at residues 27–128 (PPGK…VEPD) and 129–229 (PPVN…IPND). Cysteine 36 and cysteine 46 are disulfide-bonded. A glycan (N-linked (GlcNAc...) asparagine) is linked at asparagine 59. Cysteine 75 and cysteine 86 are joined by a disulfide. Asparagine 104 and asparagine 132 each carry an N-linked (GlcNAc...) asparagine glycan. Positions 211 and 212 each coordinate Zn(2+). The WSXWS motif motif lies at 215–219 (WSVWS). The chain crosses the membrane as a helical span at residues 235–258 (ITVWIFVAVLSTIICLIMVWAVAL). The Cytoplasmic segment spans residues 259-616 (KGYSMVTCIF…DPACFMHSLH (358 aa)). The Box 1 motif signature appears at 267 to 275 (IFPPVPGPK). Disordered stretches follow at residues 326–375 (MPAH…STFH), 454–492 (QSSK…PKEK), and 568–593 (ESTK…STAP). Residues 463-482 (GEEKATKQREVESSHSKAEQ) show a composition bias toward basic and acidic residues.

This sequence belongs to the type I cytokine receptor family. Type 1 subfamily. As to quaternary structure, interacts with SMARCA1. Interacts with NEK3 and VAV2 and this interaction is prolactin-dependent.

The protein localises to the membrane. Its function is as follows. This is a receptor for the anterior pituitary hormone prolactin. This is Prolactin receptor (PRLR) from Oryctolagus cuniculus (Rabbit).